The sequence spans 123 residues: Beta-2-microglobulin (123 aa).

Residues 1–21 form the signal peptide; it reads MSRLFLFALLGHLCFLPYLDA. The 90-residue stretch at 29-118 folds into the Ig-like C1-type domain; sequence PRVQVYSRYP…STLNEPKVVK (90 aa). Residues Cys-49 and Cys-104 are joined by a disulfide bond.

The protein belongs to the beta-2-microglobulin family. Heterodimer of an alpha chain and a beta chain. Beta-2-microglobulin is the beta-chain of major histocompatibility complex class I molecules.

It localises to the secreted. Component of the class I major histocompatibility complex (MHC). Involved in the presentation of peptide antigens to the immune system. This chain is Beta-2-microglobulin (B2M), found in Monodelphis domestica (Gray short-tailed opossum).